Here is a 544-residue protein sequence, read N- to C-terminus: Sialidase (544 aa).

An N-terminal signal peptide occupies residues 1–22 (MKKAVILFSLFCFLCAIPVVQA). BNR repeat units follow at residues 239 to 250 (SRSTDGGKTWEK), 318 to 329 (AKSTDDGKTWSA), and 378 to 389 (MYSKDGGKNWKM). Residue Glu399 is part of the active site. Arg415 lines the substrate pocket. A BNR 4 repeat occupies 425 to 436 (AITKDLGKTWTE). A substrate-binding site is contributed by Arg479. Residues 485–496 (KISLDGGVTWSP) form a BNR 5 repeat.

This sequence belongs to the glycosyl hydrolase 33 family.

Its subcellular location is the periplasm. It catalyses the reaction Hydrolysis of alpha-(2-&gt;3)-, alpha-(2-&gt;6)-, alpha-(2-&gt;8)- glycosidic linkages of terminal sialic acid residues in oligosaccharides, glycoproteins, glycolipids, colominic acid and synthetic substrates.. Functionally, sialidases have been suggested to be pathogenic factors in microbial infections. The protein is Sialidase (nanH) of Bacteroides fragilis (strain YCH46).